The chain runs to 339 residues: MESLIQVQDVVQRFIREQPCWTTFLLALGSFNALRIIYQTLSVVLQTFVLPGTSLKRFGAKKGAWAVVTGATDGIGKEFAMQLGKAGFNVLLVARNPATLAATAGEIEQKYKVQTGTFSIDFAAATEEKYTALGEVLTGLDVGVLVNNVGKSHNMPAYLVDTPRDEMRDIVEINVNATLRVTYAILPGMVKNKRGLILNIGSFAGAIPSPMLATYSGTKAFLSTFSSALGEEVKKDGIIVENVNTYFVVSKLSKIRKSSLLIPTPAPYVRSVLSKVGLACGAAFSGRPNTSTPYWSHALLDYAMTLVGIPSLFIRYTHNLHIDIRRRALRKLEREAKAQ.

A helical membrane pass occupies residues 21–41 (WTTFLLALGSFNALRIIYQTL). NADP(+)-binding residues include V67, N96, D121, N148, Y215, K219, V248, and S250. Y215 (proton acceptor) is an active-site residue. Residue K219 is the Lowers pKa of active site Tyr of the active site.

Belongs to the short-chain dehydrogenases/reductases (SDR) family.

Its subcellular location is the endoplasmic reticulum membrane. The catalysed reaction is a very-long-chain (3R)-3-hydroxyacyl-CoA + NADP(+) = a very-long-chain 3-oxoacyl-CoA + NADPH + H(+). It functions in the pathway lipid metabolism; fatty acid biosynthesis. In terms of biological role, component of the microsomal membrane bound fatty acid elongation system, which produces the 26-carbon very long-chain fatty acids (VLCFA) from palmitate. Catalyzes the reduction of the 3-ketoacyl-CoA intermediate that is formed in each cycle of fatty acid elongation. VLCFAs serve as precursors for ceramide and sphingolipids. This chain is Very-long-chain 3-oxoacyl-CoA reductase, found in Coprinopsis cinerea (strain Okayama-7 / 130 / ATCC MYA-4618 / FGSC 9003) (Inky cap fungus).